We begin with the raw amino-acid sequence, 101 residues long: Small ribosomal subunit protein bS18c (101 aa).

Over residues 1–19 (MDKSKQLFRKSKGSFRRRL) the composition is skewed to basic residues. Residues 1 to 23 (MDKSKQLFRKSKGSFRRRLPPIG) are disordered.

The protein belongs to the bacterial ribosomal protein bS18 family. In terms of assembly, part of the 30S ribosomal subunit.

It is found in the plastid. The protein localises to the chloroplast. The sequence is that of Small ribosomal subunit protein bS18c from Acorus gramineus (Dwarf sweet flag).